Here is a 1401-residue protein sequence, read N- to C-terminus: DNA-directed RNA polymerase subunit beta' (1401 aa).

Zn(2+) contacts are provided by Cys-70, Cys-72, Cys-85, and Cys-88. Mg(2+)-binding residues include Asp-460, Asp-462, and Asp-464. Residues Cys-814, Cys-888, Cys-895, and Cys-898 each contribute to the Zn(2+) site. The segment at 1369–1388 is disordered; that stretch reads RQKQKAVEQEGPSAEQATDN.

The protein belongs to the RNA polymerase beta' chain family. As to quaternary structure, the RNAP catalytic core consists of 2 alpha, 1 beta, 1 beta' and 1 omega subunit. When a sigma factor is associated with the core the holoenzyme is formed, which can initiate transcription. It depends on Mg(2+) as a cofactor. Zn(2+) serves as cofactor.

It carries out the reaction RNA(n) + a ribonucleoside 5'-triphosphate = RNA(n+1) + diphosphate. Functionally, DNA-dependent RNA polymerase catalyzes the transcription of DNA into RNA using the four ribonucleoside triphosphates as substrates. This is DNA-directed RNA polymerase subunit beta' from Aliivibrio fischeri (strain ATCC 700601 / ES114) (Vibrio fischeri).